The sequence spans 366 residues: Homer protein homolog 1 (366 aa).

G2 carries the N-acetylglycine modification. Positions 2–110 (GEQPIFSTRA…EKFQEFKEAA (109 aa)) constitute a WH1 domain. The disordered stretch occupies residues 114–189 (KEKSQEKMEL…RTQALSHASS (76 aa)). 2 stretches are compositionally biased toward polar residues: residues 138–147 (SPLTPESING) and 155–170 (DVTQ…TQNA). Residues 193–364 (KHWEAELATL…LRDNLAKLLE (172 aa)) are a coiled coil. Residues 302 to 366 (KLQEVEIRNK…DNLAKLLECS (65 aa)) are required for tetramerization. The residue at position 318 (S318) is a Phosphoserine.

This sequence belongs to the Homer family. In terms of assembly, tetramer; this tetrameric structure is critical for forming the high-order complex with SHANK1, which in turn is necessary for the structural and functional integrity of dendritic spines. Isoform 1, isoform 2 and isoform 3 encode a coiled-coil structure that mediates homo- and heteromultimerization. Interacts with GRM1, GRM5, ITPR1, DNM3, RYR1, RYR2 and SHANK3. Interacts with IFT57 and OPHN1. Interacts with SHANK1; forms high-order polymerized complex with a mesh-like network structure, at least composed of SHANK1, HOMER1 and DLGAP1; the complex formation is SHANK1 multimerization dependent. Interacts with NFATC4. Interacts with DAGLA (via PPXXF motif); this interaction is required for the cell membrane localization of DAGLA. Interacts with SRGAP2. Expressed in skeletal muscle at the level of the Z line, in the forebrain and cerebellum. In terms of tissue distribution, expressed in cardiac and skeletal muscle. As to expression, expressed in the hippocampus. Expressed in skeletal muscle at the level of the Z line, in the heart, forebrain and cerebellum.

It localises to the cytoplasm. The protein resides in the postsynaptic density. Its subcellular location is the synapse. The protein localises to the cell projection. It is found in the dendritic spine. Postsynaptic density scaffolding protein. Binds and cross-links cytoplasmic regions of GRM1, GRM5, ITPR1, DNM3, RYR1, RYR2, SHANK1 and SHANK3. By physically linking GRM1 and GRM5 with ER-associated ITPR1 receptors, it aids the coupling of surface receptors to intracellular calcium release. May also couple GRM1 to PI3 kinase through its interaction with AGAP2. Isoform 1 regulates the trafficking and surface expression of GRM5. Differentially regulates the functions of the calcium activated channel ryanodine receptors RYR1 and RYR2. Isoform 1 decreases the activity of RYR2, and increases the activity of RYR1, whereas isoform 5 counteracts the effects by competing for binding sites. Isoform 3 regulates the trafficking and surface expression of GRM5. Isoform 5 acts as a natural dominant negative, in dynamic competition with constitutively expressed isoform 1, isoform 2 and isoform 3 to regulate synaptic metabotropic glutamate function. Isoform 5, may be involved in the structural changes that occur at synapses during long-lasting neuronal plasticity and development. Forms a high-order complex with SHANK1, which in turn is necessary for the structural and functional integrity of dendritic spines. Negatively regulates T cell activation by inhibiting the calcineurin-NFAT pathway. Acts by competing with calcineurin/PPP3CA for NFAT protein binding, hence preventing NFAT activation by PPP3CA. In Mus musculus (Mouse), this protein is Homer protein homolog 1.